We begin with the raw amino-acid sequence, 603 residues long: D-3-phosphoglycerate dehydrogenase 1, chloroplastic (603 aa).

The transit peptide at 1 to 54 (MSATAAASSSIAVATNSLRNVTLSSRSPLPSAISVAFPSRGRNTLQRRLVLVSC) directs the protein to the chloroplast. NAD(+) contacts are provided by residues 210–211 (KV), D230, 289–291 (VAR), and D315. R291 is a catalytic residue. Residue E320 is part of the active site. H339 serves as the catalytic Proton donor. Residue 339–342 (HLGA) participates in NAD(+) binding. The ACT domain maps to 531 to 603 (IILCRQVDQP…AVEEFVFLKL (73 aa)).

This sequence belongs to the D-isomer specific 2-hydroxyacid dehydrogenase family. As to expression, ubiquitous, but highly expressed in roots. Expressed in vasculature, root and shoot meristems, distal part of cotyledons and leaves, anther, stigma and pollen grains. Detected at the tip of the cotyledons in late embryos.

Its subcellular location is the plastid. It localises to the chloroplast. It carries out the reaction (2R)-3-phosphoglycerate + NAD(+) = 3-phosphooxypyruvate + NADH + H(+). It functions in the pathway amino-acid biosynthesis; L-serine biosynthesis; L-serine from 3-phospho-D-glycerate: step 1/3. Partially inhibited by 5 mM serine. Involved in the plastidial phosphorylated pathway of serine biosynthesis (PPSB). Required for mature pollen development. This is D-3-phosphoglycerate dehydrogenase 1, chloroplastic (PGDH1) from Arabidopsis thaliana (Mouse-ear cress).